Consider the following 761-residue polypeptide: Zinc finger protein 287 (761 aa).

An SCAN box domain is found at 49–131 (RQNFRNFPYP…TLVEDLTQIL (83 aa)). A disordered region spans residues 134 to 154 (EAPQNSTLSQDTPEEDPRGKH). The 69-residue stretch at 170–238 (MTFKDVAVDI…IKEILEGPSP (69 aa)) folds into the KRAB domain. 14 C2H2-type zinc fingers span residues 368 to 390 (YKCNVCGKKFRKYPSLLKHQSTH), 396 to 418 (YECEECGKEFRHISSLIAHQRMH), 424 to 446 (YECHQCGKAFSQRAHLTIHQRIH), 452 to 474 (YKCDDCGKDFSQRAHLTIHQRTH), 480 to 502 (YKCLECGKTFSHSSSLINHQRVH), 508 to 530 (YICNECGKTFSQSTHLLQHQKIH), 536 to 558 (YKCNECWKVFSQSTYLIRHQRIH), 564 to 586 (YKCNECGKAFAHSSTLIQHQTTH), 592 to 614 (YICNICGKAFSQSANLTQHHRTH), 620 to 642 (YKCSVCGKAFSQSVHLTQHQRIH), 648 to 670 (FKCNICGKAYRQGANLTQHQRIH), 676 to 698 (YKCNECGKAFIYSSSLNQHQRTH), 704 to 726 (YKCNECDKDFSQRTCLIQHQRIH), and 732 to 754 (YACRICGKTFTQSTNLIQHQRVH).

The protein belongs to the krueppel C2H2-type zinc-finger protein family.

The protein resides in the nucleus. May be involved in transcriptional regulation. This is Zinc finger protein 287 from Homo sapiens (Human).